The primary structure comprises 271 residues: Purine nucleoside phosphorylase 1 (271 aa).

Phosphate-binding positions include S28, H59, 79 to 81 (RFH), and A111. S28 carries the phosphoserine modification. A purine D-ribonucleoside is bound at residue E191. Phosphate is bound at residue S210. Position 233 (N233) interacts with a purine D-ribonucleoside.

Belongs to the PNP/MTAP phosphorylase family. In terms of assembly, homotrimer.

It catalyses the reaction a purine 2'-deoxy-D-ribonucleoside + phosphate = a purine nucleobase + 2-deoxy-alpha-D-ribose 1-phosphate. It functions in the pathway purine metabolism; purine nucleoside salvage. Functionally, the purine nucleoside phosphorylases catalyze the phosphorolytic breakdown of the N-glycosidic bond in the beta-(deoxy)ribonucleoside molecules, with the formation of the corresponding free purine bases and pentose-1-phosphate. Cleaves guanosine, inosine, 2'-deoxyguanosine and 2'-deoxyinosine. The chain is Purine nucleoside phosphorylase 1 (punA) from Bacillus subtilis (strain 168).